The primary structure comprises 800 residues: Putative antiporter subunit mnhA2 (800 aa).

Helical transmembrane passes span 1-21 (MSLVYLMATNLLFMLIVLFTL), 29-49 (VAGYVALIAPIVTSTYFIMKI), 78-98 (GLSLMFGLIISLIGVGVFFYA), 109-129 (LPRFFIYLLLFMFSMIGIVIA), 133-153 (ILMYVFWELTSISSFLLISYW), 167-187 (FMITVFGGLALLTGFIILYII), 209-229 (FIPMILMLLLGAFTKSAQFPF), 241-261 (TPVSAYLHSATMVKAGIFLLF), 272-292 (VYIYTVTFVGLITMLFGSLTA), 300-320 (GILAYSTISQLGMIMTMVGLG), 336-356 (ILVLFAGLFHLMNHAVFKCAL), 387-407 (IVMLLAALSMAGVPFLNGFLS), 424-444 (YGFVLTFVIISIGVIASILTF), 472-492 (PWLFSLPAVILMLLIPVIFFV), 528-548 (VNLPLILSIVVIIIGLILALV), 595-615 (IMITLFIFVAIVVYGYLTVGF), 627-647 (GPLEVILSVVTLIIGISLIFI), 651-671 (LTMVVLNGMIGFAVTLYFIAM), 676-696 (LALTQLVVETITTILFIVSFS), 712-732 (TFKIIVSLVMALTVVSLIFVA), and 768-788 (LDTMFEGLVLIIAGLGIYTLL).

It belongs to the CPA3 antiporters (TC 2.A.63) subunit A family. May form a heterooligomeric complex that consists of seven subunits: mnhA2, mnhB2, mnhC2, mnhD2, mnhE2, mnhF2 and mnhG2.

The protein localises to the cell membrane. The protein is Putative antiporter subunit mnhA2 (mnhA2) of Staphylococcus epidermidis (strain ATCC 12228 / FDA PCI 1200).